Consider the following 436-residue polypeptide: 3-ketoacyl-CoA thiolase (436 aa).

Cysteine 99 serves as the catalytic Acyl-thioester intermediate. Catalysis depends on proton acceptor residues histidine 392 and cysteine 422.

It belongs to the thiolase-like superfamily. Thiolase family. As to quaternary structure, heterotetramer of two alpha chains (FadJ) and two beta chains (FadI).

It localises to the cytoplasm. The catalysed reaction is an acyl-CoA + acetyl-CoA = a 3-oxoacyl-CoA + CoA. Its pathway is lipid metabolism; fatty acid beta-oxidation. Catalyzes the final step of fatty acid oxidation in which acetyl-CoA is released and the CoA ester of a fatty acid two carbons shorter is formed. In Aeromonas salmonicida (strain A449), this protein is 3-ketoacyl-CoA thiolase.